The primary structure comprises 187 residues: Threonylcarbamoyl-AMP synthase (187 aa).

In terms of domain architecture, YrdC-like spans 3 to 187 (NSELLKIIWA…LLNGYLYRKR (185 aa)).

Belongs to the SUA5 family. TsaC subfamily.

The protein resides in the cytoplasm. It catalyses the reaction L-threonine + hydrogencarbonate + ATP = L-threonylcarbamoyladenylate + diphosphate + H2O. Functionally, required for the formation of a threonylcarbamoyl group on adenosine at position 37 (t(6)A37) in tRNAs that read codons beginning with adenine. Catalyzes the conversion of L-threonine, HCO(3)(-)/CO(2) and ATP to give threonylcarbamoyl-AMP (TC-AMP) as the acyladenylate intermediate, with the release of diphosphate. The chain is Threonylcarbamoyl-AMP synthase from Riesia pediculicola (strain USDA).